The chain runs to 76 residues: MIRRALVLLVRIYQRLVSPLLPPACRFYPSCSAYAVTALQRHGALRGSWLTVRRLCRCHPFHPGGVDPVPELTPKR.

This sequence belongs to the UPF0161 family.

Its subcellular location is the cell inner membrane. Could be involved in insertion of integral membrane proteins into the membrane. This is Putative membrane protein insertion efficiency factor from Anaeromyxobacter dehalogenans (strain 2CP-C).